Here is a 315-residue protein sequence, read N- to C-terminus: Aldo-keto reductase family 4 member C11 (315 aa).

Residue Ala-2 is modified to N-acetylalanine. NADP(+) contacts are provided by residues 23–24 (TW) and Asp-47. Residue Tyr-52 is the Proton donor of the active site. NADP(+)-binding positions include His-114, 158–159 (SN), Gln-180, 207–213 (SPLGSPG), 256–258 (KST), and 262–266 (RIREN). Ser-295 is subject to Phosphoserine.

Belongs to the aldo/keto reductase family.

Its function is as follows. Oxidoreductase that may act on a broad range of substrates such as ketosteroids, aldehydes, ketones and sugars. This chain is Aldo-keto reductase family 4 member C11 (AKR4C11), found in Arabidopsis thaliana (Mouse-ear cress).